The chain runs to 157 residues: SsrA-binding protein (157 aa).

Belongs to the SmpB family.

The protein resides in the cytoplasm. Required for rescue of stalled ribosomes mediated by trans-translation. Binds to transfer-messenger RNA (tmRNA), required for stable association of tmRNA with ribosomes. tmRNA and SmpB together mimic tRNA shape, replacing the anticodon stem-loop with SmpB. tmRNA is encoded by the ssrA gene; the 2 termini fold to resemble tRNA(Ala) and it encodes a 'tag peptide', a short internal open reading frame. During trans-translation Ala-aminoacylated tmRNA acts like a tRNA, entering the A-site of stalled ribosomes, displacing the stalled mRNA. The ribosome then switches to translate the ORF on the tmRNA; the nascent peptide is terminated with the 'tag peptide' encoded by the tmRNA and targeted for degradation. The ribosome is freed to recommence translation, which seems to be the essential function of trans-translation. The protein is SsrA-binding protein of Chlorobium chlorochromatii (strain CaD3).